Reading from the N-terminus, the 338-residue chain is Phenylalanine--tRNA ligase alpha subunit (338 aa).

A Mg(2+)-binding site is contributed by E253.

Belongs to the class-II aminoacyl-tRNA synthetase family. Phe-tRNA synthetase alpha subunit type 1 subfamily. In terms of assembly, tetramer of two alpha and two beta subunits. Requires Mg(2+) as cofactor.

It localises to the cytoplasm. It catalyses the reaction tRNA(Phe) + L-phenylalanine + ATP = L-phenylalanyl-tRNA(Phe) + AMP + diphosphate + H(+). In Syntrophus aciditrophicus (strain SB), this protein is Phenylalanine--tRNA ligase alpha subunit.